We begin with the raw amino-acid sequence, 729 residues long: MPQPIFDRILPAFLYERIATVLLAQASRRGATVLTREEVIASTDAPFLIVVAESFALLLQAEPVPQMSTYRVAILTNPRAIARFLRKIRSQVPVNRRPLIRAVLQQLSPLNAKEQMLPADLAIALMAVLGEETTAQCQSCQPLVTAALNERQAQERLLHQVTTQIRQSLELPELLKIAVDRIREFLDVDRLLVGQFAQTEGELRGQITYESCRNSEIPSVLGIWDDCWQWSGLPSSSYQRLSQGEAIVVSDIQQFYGAVPCLQSFAAHWQIKSWLIVPIIVQDRLWGVLIAHQCDRPRQWQPQEVEFLTHLSQHLSIAIYQAQLYSELQQQKATLEQRVNERTQALREALSAMEAAHRIKNDFLATMSHELRTPLTCVIGVSATLLRWPLGPLTAKQREYLEIIHESGTHLLELINSILDLSEAELGRSQLHRSAFSIRQLCADCLEVVKPQAHRHQVNLRHQLMIPPTRDRFWGDYRRIQQILINLLSNAIKFTPAMGEVILRAWWKEDELIFQVQDTGIGIPAHLQSLLFQKFQQLDSSFGRAYTGAGLGLALTKQWVDLHHGWIDVDSTEGKGSTFTVGLPAISDPLPDPPKPKLDVPPLATTEVLVEPEGRIVLVSEDEATSTLICSILTTAGYQVIWLVDGEVERLLALTPIAVLLAEPFSYGDVQELVDQLRQRCTPEQLKIFILGSKGNYQGVDRYIPLPIHPESFLQQVTMGLTSLATSAQ.

The interval 1-169 (MPQPIFDRIL…QVTTQIRQSL (169 aa)) is N-terminal domain. Positions 170-314 (ELPELLKIAV…VEFLTHLSQH (145 aa)) are GAF domain. One can recognise a Histidine kinase domain in the interval 366 to 587 (TMSHELRTPL…TFTVGLPAIS (222 aa)). At histidine 369 the chain carries Phosphohistidine; by autocatalysis. Positions 613–729 (EGRIVLVSED…GLTSLATSAQ (117 aa)) are psR domain, binds KaiB.

The protein in the N-terminal section; belongs to the phytochrome family. In terms of assembly, homodimer. Part of the circadian clock (KaiA, KaiB, KaiC, CikA, RpaA, SasA), the composition of which varies during the circadian cycle. KaiA and CikA compete for binding to KaiB(fs). The PsR domain binds the KaiB:KaiC CI complex but poorly to either protein alone. KaiA and CikA bind to the same region of the KaiB(fs) form and therefore compete.

The enzyme catalyses ATP + protein L-histidine = ADP + protein N-phospho-L-histidine.. Its function is as follows. Functions in an input pathway to the Kai circadian clock. Senses oxidized quinones via its C-terminal pseudo-receiver domain, providing a link between cell metabolism and the clock. Affects the ratio of phosphorylated to unphosphorylated KaiC, binds quinones via its pseudo-receptor domain. Quinone-binding destabilizes the protein rapidly. Autophosphorylates, does not transfer the phosphate to its pseudo-receiver (PsR) domain. May play a role in cell division. Functionally, also functions in a two-component CikA/RpaA output pathway from the circadian clock, negatively regulating kaiBC expression independently of labA and of sasA. One of three clock output pathways. Dephosphorylates phospho-RpaA, enhanced by KaiB and KaiC, has only modest kinase activity on RpaA. The sequence is that of Circadian input-output histidine kinase CikA from Thermosynechococcus vestitus (strain NIES-2133 / IAM M-273 / BP-1).